The chain runs to 103 residues: Integration host factor subunit alpha (103 aa).

Residues F51–I73 form a disordered region.

Belongs to the bacterial histone-like protein family. In terms of assembly, heterodimer of an alpha and a beta chain.

In terms of biological role, this protein is one of the two subunits of integration host factor, a specific DNA-binding protein that functions in genetic recombination as well as in transcriptional and translational control. This is Integration host factor subunit alpha from Azoarcus sp. (strain BH72).